A 332-amino-acid polypeptide reads, in one-letter code: D-2-hydroxyacid dehydrogenase (NAD(+)) (332 aa).

Catalysis depends on residues Arg237 and Glu266. Residue His298 is the Proton donor of the active site.

This sequence belongs to the D-isomer specific 2-hydroxyacid dehydrogenase family. As to quaternary structure, monomer.

It carries out the reaction a (2R)-2-hydroxycarboxylate + NAD(+) = a 2-oxocarboxylate + NADH + H(+). The enzyme catalyses (2R)-hydroxy-4-methylpentanoate + NAD(+) = 4-methyl-2-oxopentanoate + NADH + H(+). It functions in the pathway amino-acid degradation; L-leucine degradation. Involved in the reductive branch of L-leucine fermentation. Catalyzes the NADH-dependent reduction of 4-methyl-2-oxopentanoate (2-oxoisocaproate) to (R)-2-hydroxy-4-methylpentanoate ((R)-2-hydroxyisocaproate). For the reverse reaction, the enzyme accepts (R)- but not (S)-2-hydroxy-4-methylpentanoate. Can also use 2-oxopentanoate, 2-oxohexanoate and phenylpyruvate but not 2-oxoisovalerate and 2-oxobutyrate. Cannot use NADPH. The sequence is that of D-2-hydroxyacid dehydrogenase (NAD(+)) from Clostridioides difficile (Peptoclostridium difficile).